Here is a 405-residue protein sequence, read N- to C-terminus: Terminal uridylyltransferase cid1 (405 aa).

Ser90 contributes to the UTP binding site. The Mg(2+) site is built by Asp101 and Asp103. UTP-binding residues include Ala168, Asn171, Thr172, Lys193, Lys197, Ser211, Tyr212, and His336. One can recognise a PAP-associated domain in the interval 267-336 (SLGSLLHGFF…AIEDPFEISH (70 aa)). Position 340 (Arg340) interacts with ATP. The disordered stretch occupies residues 377–405 (APIPPRRQKKTDEQSNKKLLNETDGDNSE). Positions 386 to 397 (KTDEQSNKKLLN) are enriched in basic and acidic residues.

The protein belongs to the DNA polymerase type-B-like family. Mg(2+) is required as a cofactor. Requires Mn(2+) as cofactor.

The protein resides in the cytoplasm. It catalyses the reaction RNA(n) + UTP = RNA(n)-3'-uridine ribonucleotide + diphosphate. It carries out the reaction RNA(n) + ATP = RNA(n)-3'-adenine ribonucleotide + diphosphate. Functionally, cytoplasmic uridylyltransferase that mediates the terminal uridylation of mRNAs with short poly(A) tails such as such as act1, hcn1 and urg1 mRNAs, hence facilitating global mRNA decay. Uridylates the 3' ends of actin mRNAs upon S-phase arrest. Also has a weak poly(A) polymerase (PAP) activity. Residue His-336 is responsible for the specificity for UTP. Involved in cell cycle arrest where in association with crb2/rhp9 and chk1 it inhibits unscheduled mitosis. The protein is Terminal uridylyltransferase cid1 of Schizosaccharomyces pombe (strain 972 / ATCC 24843) (Fission yeast).